The following is a 459-amino-acid chain: Putrescine aminotransferase (459 aa).

Pyridoxal 5'-phosphate contacts are provided by residues 150–151 (GT) and Gln-274. Lys-300 bears the N6-(pyridoxal phosphate)lysine mark. Thr-332 provides a ligand contact to pyridoxal 5'-phosphate.

Belongs to the class-III pyridoxal-phosphate-dependent aminotransferase family. Putrescine aminotransferase subfamily. It depends on pyridoxal 5'-phosphate as a cofactor.

The enzyme catalyses an alkane-alpha,omega-diamine + 2-oxoglutarate = an omega-aminoaldehyde + L-glutamate. It carries out the reaction putrescine + 2-oxoglutarate = 1-pyrroline + L-glutamate + H2O. The catalysed reaction is cadaverine + 2-oxoglutarate = 5-aminopentanal + L-glutamate. It functions in the pathway amine and polyamine degradation; putrescine degradation; 4-aminobutanal from putrescine (transaminase route): step 1/1. Its function is as follows. Catalyzes the aminotransferase reaction from putrescine to 2-oxoglutarate, leading to glutamate and 4-aminobutanal, which spontaneously cyclizes to form 1-pyrroline. This is the first step in one of two pathways for putrescine degradation, where putrescine is converted into 4-aminobutanoate (gamma-aminobutyrate or GABA) via 4-aminobutanal. Also functions as a cadaverine transaminase in a a L-lysine degradation pathway to succinate that proceeds via cadaverine, glutarate and L-2-hydroxyglutarate. The sequence is that of Putrescine aminotransferase from Salmonella dublin (strain CT_02021853).